The following is a 580-amino-acid chain: FAD-dependent monooxygenase yanF (580 aa).

A disordered region spans residues 1–21 (MSSSAECRPIGWGGWGPDPNT). Residues 150–322 (CRLNASCIVT…VEYDLTTNTG (173 aa)) form the FAD-binding PCMH-type domain. Histidine 187 carries the pros-8alpha-FAD histidine modification.

This sequence belongs to the oxygen-dependent FAD-linked oxidoreductase family.

It participates in secondary metabolite biosynthesis; terpenoid biosynthesis. Functionally, FAD-dependent monooxygenase; part of the gene cluster that mediates the biosynthesis of yanuthone D, a fungal isoprenoid epoxycyclohexenone that acts as an antibiotic against fungi and bacteria. The first step of the pathway is the synthesis of 6-methylsalicylic acid (6-MSA) by the polyketide synthase yanA. 6-MSA is then converted to m-cresol by the decarboxylase yanB. The cytochrome P450 monooxygenase yanC then catalyzes the oxidation of m-cresol to toluquinol. Epoxidation of toluquinol is then performed by the short chain dehydrogenase yanD, with the help of yanE, and a further prenylated by yanG leads to 7-deacetoxyyanuthone A. The next step is the hydroxylation of C-22 of 7-deacetoxyyanuthone A by the cytochrome P450 monooxygenase yanH to yield 22-deacetylyanuthone A. O-Mevalon transferase yanI then attaches mevalon to the hydroxyl group of 22-deacetylyanuthone A to produce yanuthone E. Finally, the FAD-dependent monooxygenase yanF oxidizes the hydroxyl group at C15 of yanuthone E to form yanuthone D. Furthermore, several branching points in the pathway lead to the production of yanuthones F and G from 7-deacetoxyyanuthone A; yanuthones H and I from 22-deacetylyanuthone A; and yanuthone J from yanuthone E. This is FAD-dependent monooxygenase yanF from Aspergillus niger (strain ATCC 1015 / CBS 113.46 / FGSC A1144 / LSHB Ac4 / NCTC 3858a / NRRL 328 / USDA 3528.7).